We begin with the raw amino-acid sequence, 512 residues long: Glutathione-binding protein GsiB (512 aa).

Positions 1–26 (MARAVHRSGLVALGIVTALMASCAFA) are cleaved as a signal peptide.

It belongs to the bacterial solute-binding protein 5 family. In terms of assembly, the complex is composed of two ATP-binding proteins (GsiA), two transmembrane proteins (GsiC and GsiD) and a solute-binding protein (GsiB).

The protein resides in the periplasm. Its function is as follows. Part of the ABC transporter complex GsiABCD involved in glutathione import. Binds glutathione. In Shigella dysenteriae serotype 1 (strain Sd197), this protein is Glutathione-binding protein GsiB.